The sequence spans 583 residues: Aspartate--tRNA(Asp/Asn) ligase (583 aa).

Glu171 provides a ligand contact to L-aspartate. The aspartate stretch occupies residues 195–198; it reads QLFK. Residue Arg217 participates in L-aspartate binding. Residues 217–219 and Gln226 contribute to the ATP site; that span reads RDE. His443 is a binding site for L-aspartate. Position 476 (Glu476) interacts with ATP. Position 483 (Arg483) interacts with L-aspartate. 528-531 serves as a coordination point for ATP; the sequence is GLDR.

The protein belongs to the class-II aminoacyl-tRNA synthetase family. Type 1 subfamily. In terms of assembly, homodimer.

The protein localises to the cytoplasm. It catalyses the reaction tRNA(Asx) + L-aspartate + ATP = L-aspartyl-tRNA(Asx) + AMP + diphosphate. In terms of biological role, aspartyl-tRNA synthetase with relaxed tRNA specificity since it is able to aspartylate not only its cognate tRNA(Asp) but also tRNA(Asn). Reaction proceeds in two steps: L-aspartate is first activated by ATP to form Asp-AMP and then transferred to the acceptor end of tRNA(Asp/Asn). This is Aspartate--tRNA(Asp/Asn) ligase from Ruthia magnifica subsp. Calyptogena magnifica.